The following is a 124-amino-acid chain: Large ribosomal subunit protein bL17 (124 aa).

The protein belongs to the bacterial ribosomal protein bL17 family. As to quaternary structure, part of the 50S ribosomal subunit. Contacts protein L32.

The protein is Large ribosomal subunit protein bL17 of Persephonella marina (strain DSM 14350 / EX-H1).